The primary structure comprises 110 residues: Flagellar hook-basal body complex protein FliE (110 aa).

This sequence belongs to the FliE family.

Its subcellular location is the bacterial flagellum basal body. The polypeptide is Flagellar hook-basal body complex protein FliE (Ralstonia nicotianae (strain ATCC BAA-1114 / GMI1000) (Ralstonia solanacearum)).